Here is a 580-residue protein sequence, read N- to C-terminus: Putative Xaa-Pro dipeptidyl-peptidase (580 aa).

Active-site charge relay system residues include Ser207, Asp319, and His350.

This sequence belongs to the peptidase S15 family.

It catalyses the reaction Hydrolyzes Xaa-Pro-|- bonds to release unblocked, N-terminal dipeptides from substrates including Ala-Pro-|-p-nitroanilide and (sequentially) Tyr-Pro-|-Phe-Pro-|-Gly-Pro-|-Ile.. The sequence is that of Putative Xaa-Pro dipeptidyl-peptidase from Bacillus cereus (strain ATCC 14579 / DSM 31 / CCUG 7414 / JCM 2152 / NBRC 15305 / NCIMB 9373 / NCTC 2599 / NRRL B-3711).